The sequence spans 172 residues: Urease accessory protein UreE (172 aa).

Belongs to the UreE family.

Its subcellular location is the cytoplasm. Functionally, involved in urease metallocenter assembly. Binds nickel. Probably functions as a nickel donor during metallocenter assembly. This is Urease accessory protein UreE from Shewanella halifaxensis (strain HAW-EB4).